Consider the following 515-residue polypeptide: Ecdysteroid UDP-glucosyltransferase (515 aa).

The signal sequence occupies residues 1–31 (MKMIILVVSLHVLRNSAAVRVLCMFPTPSYS).

It belongs to the UDP-glycosyltransferase family.

In terms of biological role, catalyzes the transfer of glucose from UDP-glucose to ecdysteroids which are insect molting hormones. Expression of egt interferes with normal insect development and block molting. The polypeptide is Ecdysteroid UDP-glucosyltransferase (EGT) (Spodoptera littoralis nuclear polyhedrosis virus (SlNPV)).